The following is a 219-amino-acid chain: Uracil-DNA glycosylase (219 aa).

Catalysis depends on Asp61, which acts as the Proton acceptor.

It belongs to the uracil-DNA glycosylase (UDG) superfamily. UNG family.

It is found in the cytoplasm. It carries out the reaction Hydrolyzes single-stranded DNA or mismatched double-stranded DNA and polynucleotides, releasing free uracil.. Excises uracil residues from the DNA which can arise as a result of misincorporation of dUMP residues by DNA polymerase or due to deamination of cytosine. The protein is Uracil-DNA glycosylase of Neisseria meningitidis serogroup A / serotype 4A (strain DSM 15465 / Z2491).